The following is a 101-amino-acid chain: Acylphosphatase (101 aa).

One can recognise an Acylphosphatase-like domain in the interval 11 to 99 (SWLVKAIGRV…PRLNRFDRLP (89 aa)). Catalysis depends on residues R26 and N44.

It belongs to the acylphosphatase family.

It catalyses the reaction an acyl phosphate + H2O = a carboxylate + phosphate + H(+). This chain is Acylphosphatase (acyP), found in Polaromonas naphthalenivorans (strain CJ2).